The sequence spans 186 residues: Tumor necrosis factor alpha-induced protein 8-like protein 2 (186 aa).

This sequence belongs to the TNFAIP8 family. TNFAIP8L2 subfamily.

Acts as a negative regulator of innate and adaptive immunity by maintaining immune homeostasis. Negative regulator of Toll-like receptor and T-cell receptor function. Prevents hyperresponsiveness of the immune system and maintains immune homeostasis. Inhibits jun/ap1 and NF-kappa-B activation. Promotes Fas-induced apoptosis. The sequence is that of Tumor necrosis factor alpha-induced protein 8-like protein 2 (tnfaip8l2) from Xenopus laevis (African clawed frog).